We begin with the raw amino-acid sequence, 214 residues long: Pyridoxine/pyridoxamine 5'-phosphate oxidase (214 aa).

Residues 8–11 (RTNY) and Lys-66 each bind substrate. Residues 61–66 (RIVLIK), 76–77 (FT), Arg-82, Lys-83, and Gln-105 each bind FMN. The substrate site is built by Tyr-123, Arg-127, and Ser-131. FMN-binding positions include 140–141 (QS) and Trp-184. Residue 190–192 (RLH) participates in substrate binding. Arg-194 serves as a coordination point for FMN.

It belongs to the pyridoxamine 5'-phosphate oxidase family. Homodimer. FMN is required as a cofactor.

It carries out the reaction pyridoxamine 5'-phosphate + O2 + H2O = pyridoxal 5'-phosphate + H2O2 + NH4(+). It catalyses the reaction pyridoxine 5'-phosphate + O2 = pyridoxal 5'-phosphate + H2O2. It functions in the pathway cofactor metabolism; pyridoxal 5'-phosphate salvage; pyridoxal 5'-phosphate from pyridoxamine 5'-phosphate: step 1/1. Its pathway is cofactor metabolism; pyridoxal 5'-phosphate salvage; pyridoxal 5'-phosphate from pyridoxine 5'-phosphate: step 1/1. Its function is as follows. Catalyzes the oxidation of either pyridoxine 5'-phosphate (PNP) or pyridoxamine 5'-phosphate (PMP) into pyridoxal 5'-phosphate (PLP). In Burkholderia mallei (strain NCTC 10247), this protein is Pyridoxine/pyridoxamine 5'-phosphate oxidase.